The following is a 498-amino-acid chain: Ribulose bisphosphate carboxylase large chain (498 aa).

A propeptide spanning residues 1-2 (MS) is cleaved from the precursor. Position 3 is an N-acetylproline (P3). Position 14 is an N6,N6,N6-trimethyllysine (K14). Positions 123 and 173 each coordinate substrate. The active-site Proton acceptor is the K175. Substrate is bound at residue K177. The Mg(2+) site is built by K201, D203, and E204. K201 is modified (N6-carboxylysine). H294 acts as the Proton acceptor in catalysis. Substrate contacts are provided by R295, H327, and S379. The interval 471–498 (PVDTLDPNDKKQRDNEDTLADKLFGDKG) is disordered.

It belongs to the RuBisCO large chain family. Type I subfamily. As to quaternary structure, heterohexadecamer of 8 large chains and 8 small chains; disulfide-linked. The disulfide link is formed within the large subunit homodimers. The cofactor is Mg(2+). The disulfide bond which can form in the large chain dimeric partners within the hexadecamer appears to be associated with oxidative stress and protein turnover.

The protein resides in the plastid. The catalysed reaction is 2 (2R)-3-phosphoglycerate + 2 H(+) = D-ribulose 1,5-bisphosphate + CO2 + H2O. The enzyme catalyses D-ribulose 1,5-bisphosphate + O2 = 2-phosphoglycolate + (2R)-3-phosphoglycerate + 2 H(+). Functionally, ruBisCO catalyzes two reactions: the carboxylation of D-ribulose 1,5-bisphosphate, the primary event in carbon dioxide fixation, as well as the oxidative fragmentation of the pentose substrate in the photorespiration process. Both reactions occur simultaneously and in competition at the same active site. The polypeptide is Ribulose bisphosphate carboxylase large chain (rbcL) (Cuscuta reflexa (Southern Asian dodder)).